The sequence spans 247 residues: Geranylgeranylglyceryl phosphate synthase (247 aa).

2 residues coordinate Mg(2+): Asp-23 and Ser-52. Residues 171 to 177 (YLEAGSG), 203 to 204 (GG), and 225 to 226 (GT) each bind sn-glycerol 1-phosphate.

Belongs to the GGGP/HepGP synthase family. Group II subfamily. The cofactor is Mg(2+).

It localises to the cytoplasm. The catalysed reaction is sn-glycerol 1-phosphate + (2E,6E,10E)-geranylgeranyl diphosphate = sn-3-O-(geranylgeranyl)glycerol 1-phosphate + diphosphate. The protein operates within membrane lipid metabolism; glycerophospholipid metabolism. Functionally, prenyltransferase that catalyzes the transfer of the geranylgeranyl moiety of geranylgeranyl diphosphate (GGPP) to the C3 hydroxyl of sn-glycerol-1-phosphate (G1P). This reaction is the first ether-bond-formation step in the biosynthesis of archaeal membrane lipids. This chain is Geranylgeranylglyceryl phosphate synthase, found in Methanosarcina acetivorans (strain ATCC 35395 / DSM 2834 / JCM 12185 / C2A).